The sequence spans 631 residues: RING finger protein 112 (631 aa).

Residues 57 to 98 (CSICLERLRDPISLDCGHDFCIRCFSTHRLPGCEPPCCPECR) form an RING-type zinc finger. Positions 131–631 (PVRAEPLLLV…GDREPLLQEE (501 aa)) are interaction with ZBTB16. The region spanning 166-397 (DTPVCLLAVL…YVSDVLSAAP (232 aa)) is the GB1/RHD3-type G domain. 318–319 (RD) is a GTP binding site. Helical transmembrane passes span 547 to 567 (LAAV…GVVG) and 580 to 600 (GMVA…GGGV).

This sequence belongs to the TRAFAC class dynamin-like GTPase superfamily. GB1/RHD3 GTPase family. GB1 subfamily. As to quaternary structure, self-associates. Interacts with SP1 in an oxidative stress-regulated manner. Interacts with SIGMAR1 in an oxidative stress-regulated manner. Interacts with ZBTB16 (via C2H2-type zinc finger domains 1 and 2). In terms of processing, auto-ubiquitinated. Predominantly expressed in brain. Decreased expression in glioma brain tumors as compared to normal brains (at protein level).

It is found in the membrane. Its subcellular location is the cytoplasm. The protein resides in the nucleus. It localises to the nuclear body. The protein localises to the nucleoplasm. It is found in the endosome. Its subcellular location is the cytoplasmic vesicle. The protein resides in the secretory vesicle. It localises to the synaptic vesicle. The protein localises to the postsynaptic density. It is found in the perikaryon. Its subcellular location is the cell projection. The protein resides in the neuron projection. The catalysed reaction is S-ubiquitinyl-[E2 ubiquitin-conjugating enzyme]-L-cysteine + [acceptor protein]-L-lysine = [E2 ubiquitin-conjugating enzyme]-L-cysteine + N(6)-ubiquitinyl-[acceptor protein]-L-lysine.. Its pathway is protein modification; protein ubiquitination. Functionally, E3 ubiquitin-protein ligase that plays an important role in neuronal differentiation, including neurogenesis and gliogenesis, during brain development. During embryonic development initiates neuronal differentiation by inducing cell cycle arrest at the G0/G1 phase through up-regulation of cell-cycle regulatory proteins. Plays a role not only in the fetal period during the development of the nervous system, but also in the adult brain, where it is involved in the maintenance of neural functions and protection of the nervous tissue cells from oxidative stress-induced damage. Exhibits GTPase and E3 ubiquitin-protein ligase activities. Regulates dendritic spine density and synaptic neurotransmission; its ability to hydrolyze GTP is involved in the maintenance of dendritic spine density. The chain is RING finger protein 112 (RNF112) from Homo sapiens (Human).